Reading from the N-terminus, the 123-residue chain is Fluoride-specific ion channel FluC (123 aa).

The next 4 membrane-spanning stretches (helical) occupy residues 5–25, 35–55, 67–87, and 100–120; these read IIAL…YISG, IGTL…YGLL, IFLG…SYET, and FANI…GFIL. Na(+) is bound by residues glycine 75 and serine 78.

Belongs to the fluoride channel Fluc/FEX (TC 1.A.43) family.

It localises to the cell membrane. The catalysed reaction is fluoride(in) = fluoride(out). Its activity is regulated as follows. Na(+) is not transported, but it plays an essential structural role and its presence is essential for fluoride channel function. In terms of biological role, fluoride-specific ion channel. Important for reducing fluoride concentration in the cell, thus reducing its toxicity. This is Fluoride-specific ion channel FluC from Pyrococcus horikoshii (strain ATCC 700860 / DSM 12428 / JCM 9974 / NBRC 100139 / OT-3).